Reading from the N-terminus, the 448-residue chain is UDP-N-acetylmuramoylalanine--D-glutamate ligase (448 aa).

116–122 contributes to the ATP binding site; sequence GSNAKST.

This sequence belongs to the MurCDEF family.

Its subcellular location is the cytoplasm. It catalyses the reaction UDP-N-acetyl-alpha-D-muramoyl-L-alanine + D-glutamate + ATP = UDP-N-acetyl-alpha-D-muramoyl-L-alanyl-D-glutamate + ADP + phosphate + H(+). It functions in the pathway cell wall biogenesis; peptidoglycan biosynthesis. Functionally, cell wall formation. Catalyzes the addition of glutamate to the nucleotide precursor UDP-N-acetylmuramoyl-L-alanine (UMA). The protein is UDP-N-acetylmuramoylalanine--D-glutamate ligase of Pseudomonas syringae pv. syringae (strain B728a).